Reading from the N-terminus, the 349-residue chain is Ribosomal RNA large subunit methyltransferase M (349 aa).

Residues Ser-183, 216–219 (APGG), Asp-235, Asp-255, and Asp-271 contribute to the S-adenosyl-L-methionine site. Lys-300 acts as the Proton acceptor in catalysis.

It belongs to the class I-like SAM-binding methyltransferase superfamily. RNA methyltransferase RlmE family. RlmM subfamily. Monomer.

It is found in the cytoplasm. It carries out the reaction cytidine(2498) in 23S rRNA + S-adenosyl-L-methionine = 2'-O-methylcytidine(2498) in 23S rRNA + S-adenosyl-L-homocysteine + H(+). In terms of biological role, catalyzes the 2'-O-methylation at nucleotide C2498 in 23S rRNA. The polypeptide is Ribosomal RNA large subunit methyltransferase M (Stutzerimonas stutzeri (strain A1501) (Pseudomonas stutzeri)).